The following is a 197-amino-acid chain: Glycerol-3-phosphate acyltransferase (197 aa).

5 helical membrane passes run M1–I21, L50–A70, I82–F102, L112–A132, and G159–H179.

Belongs to the PlsY family. In terms of assembly, probably interacts with PlsX.

The protein resides in the cell inner membrane. It catalyses the reaction an acyl phosphate + sn-glycerol 3-phosphate = a 1-acyl-sn-glycero-3-phosphate + phosphate. It functions in the pathway lipid metabolism; phospholipid metabolism. Catalyzes the transfer of an acyl group from acyl-phosphate (acyl-PO(4)) to glycerol-3-phosphate (G3P) to form lysophosphatidic acid (LPA). This enzyme utilizes acyl-phosphate as fatty acyl donor, but not acyl-CoA or acyl-ACP. The polypeptide is Glycerol-3-phosphate acyltransferase (Desulfotalea psychrophila (strain LSv54 / DSM 12343)).